A 370-amino-acid chain; its full sequence is Putative L-lysine 2,3-aminomutase aq_454 (370 aa).

A Radical SAM core domain is found at 107–322; the sequence is HRYPDRVLLN…RGRLSGFGIP (216 aa). Cysteine 121, cysteine 125, and cysteine 128 together coordinate [4Fe-4S] cluster. Lysine 334 bears the N6-(pyridoxal phosphate)lysine mark.

Belongs to the radical SAM superfamily. KamA family. The cofactor is [4Fe-4S] cluster. Pyridoxal 5'-phosphate is required as a cofactor.

This chain is Putative L-lysine 2,3-aminomutase aq_454, found in Aquifex aeolicus (strain VF5).